The primary structure comprises 569 residues: Proline--tRNA ligase (569 aa).

It belongs to the class-II aminoacyl-tRNA synthetase family. ProS type 1 subfamily. In terms of assembly, homodimer.

The protein resides in the cytoplasm. It carries out the reaction tRNA(Pro) + L-proline + ATP = L-prolyl-tRNA(Pro) + AMP + diphosphate. Its function is as follows. Catalyzes the attachment of proline to tRNA(Pro) in a two-step reaction: proline is first activated by ATP to form Pro-AMP and then transferred to the acceptor end of tRNA(Pro). As ProRS can inadvertently accommodate and process non-cognate amino acids such as alanine and cysteine, to avoid such errors it has two additional distinct editing activities against alanine. One activity is designated as 'pretransfer' editing and involves the tRNA(Pro)-independent hydrolysis of activated Ala-AMP. The other activity is designated 'posttransfer' editing and involves deacylation of mischarged Ala-tRNA(Pro). The misacylated Cys-tRNA(Pro) is not edited by ProRS. In Endomicrobium trichonymphae, this protein is Proline--tRNA ligase.